A 226-amino-acid chain; its full sequence is N-(5'-phosphoribosyl)anthranilate isomerase 2 (226 aa).

Belongs to the TrpF family.

It catalyses the reaction N-(5-phospho-beta-D-ribosyl)anthranilate = 1-(2-carboxyphenylamino)-1-deoxy-D-ribulose 5-phosphate. The protein operates within amino-acid biosynthesis; L-tryptophan biosynthesis; L-tryptophan from chorismate: step 3/5. The chain is N-(5'-phosphoribosyl)anthranilate isomerase 2 (trpF2) from Methanosarcina mazei (strain ATCC BAA-159 / DSM 3647 / Goe1 / Go1 / JCM 11833 / OCM 88) (Methanosarcina frisia).